Consider the following 445-residue polypeptide: Putative ATP-dependent RNA helicase L538 (445 aa).

The 138-residue stretch at 14–151 (IEFMKNNRGV…AVLVNIVRGE (138 aa)) folds into the Helicase ATP-binding domain. Residue 27–34 (HSTGAGKT) coordinates ATP. Positions 101–104 (DEAH) match the DEAH box motif. Positions 273–442 (KIEDIMKYII…VIDASIENNY (170 aa)) constitute a Helicase C-terminal domain.

This sequence belongs to the DEAD box helicase family. DEAH subfamily.

The protein localises to the virion. It carries out the reaction ATP + H2O = ADP + phosphate + H(+). This chain is Putative ATP-dependent RNA helicase L538, found in Acanthamoeba polyphaga mimivirus (APMV).